A 256-amino-acid polypeptide reads, in one-letter code: MTFDFDVITLFPEMFNAVTRYGVTGRANENAIYRLYTWNPREFTEDNYRRVDDRPYGGGPGMVMLAEPLEKAITAARERQRACGIGSTKVVYLSPQGRPLNQNVVMELSELSALVLLAGRYEGVDERLIERQVDYEISIGDYVVSGGELASMVLMDCVVRQLPGVLGDPESANQDSFTAGLLDFPHYTRPEVYRGSVVPEVLLSGNHARIERWRLQQSLGRTWLRRPDLLALKMEKGLTAEERKLLEEFQHAYEAN.

Residues glycine 119 and 139–144 (IGDYVV) each bind S-adenosyl-L-methionine.

It belongs to the RNA methyltransferase TrmD family. Homodimer.

It is found in the cytoplasm. It catalyses the reaction guanosine(37) in tRNA + S-adenosyl-L-methionine = N(1)-methylguanosine(37) in tRNA + S-adenosyl-L-homocysteine + H(+). Functionally, specifically methylates guanosine-37 in various tRNAs. In Nitrosospira multiformis (strain ATCC 25196 / NCIMB 11849 / C 71), this protein is tRNA (guanine-N(1)-)-methyltransferase.